Consider the following 75-residue polypeptide: Porwaprin-b (75 aa).

Positions 1 to 24 (MSSGGLLLLLGLLTLWAELTPVSG) are cleaved as a signal peptide. Positions 27-72 (RPVKPGLCPPRPQKPPCVKECKNDWSCRGEQKCCHYGCIYECRDPI) constitute a WAP domain. Cystine bridges form between Cys-34-Cys-60, Cys-43-Cys-64, Cys-47-Cys-59, and Cys-53-Cys-68.

It belongs to the venom waprin family. As to expression, expressed by the venom gland.

The protein localises to the secreted. In terms of biological role, damages membranes of susceptible bacteria. Has no hemolytic activity. Not toxic to mice. Does not inhibit the proteinases elastase and cathepsin G. In Pseudechis porphyriacus (Red-bellied black snake), this protein is Porwaprin-b.